We begin with the raw amino-acid sequence, 235 residues long: Probable inactive serine protease 37 (235 aa).

Residues 1–19 (MKFIFYLSVLTGTFLFADS) form the signal peptide. Positions 20-233 (SVQKEDPAPY…YVSWIENTAK (214 aa)) constitute a Peptidase S1 domain. 3 cysteine pairs are disulfide-bonded: Cys-40–Cys-56, Cys-131–Cys-198, and Cys-163–Cys-177.

This sequence belongs to the peptidase S1 family.

The protein localises to the cytoplasmic vesicle. It localises to the secretory vesicle. It is found in the acrosome. The protein resides in the secreted. Functionally, plays a role in male fertility. May have a role in sperm migration or binding to zona-intact eggs. Involved in the activation of the proacrosin/acrosin system. The chain is Probable inactive serine protease 37 from Macaca fascicularis (Crab-eating macaque).